A 336-amino-acid polypeptide reads, in one-letter code: Ferredoxin--NADP reductase 1 (336 aa).

Residues Glu-37, Lys-45, Phe-50, Val-90, Leu-125, Asp-287, and Thr-328 each contribute to the FAD site.

Belongs to the ferredoxin--NADP reductase type 2 family. Homodimer. It depends on FAD as a cofactor.

The catalysed reaction is 2 reduced [2Fe-2S]-[ferredoxin] + NADP(+) + H(+) = 2 oxidized [2Fe-2S]-[ferredoxin] + NADPH. This is Ferredoxin--NADP reductase 1 (ycgT) from Bacillus subtilis (strain 168).